Here is a 390-residue protein sequence, read N- to C-terminus: Succinate--CoA ligase [ADP-forming] subunit beta (390 aa).

The ATP-grasp domain occupies 9-244 (KEILKRYGVN…ETQTDTSENE (236 aa)). Residues K46, 53–55 (GRG), E99, L102, and E107 each bind ATP. The Mg(2+) site is built by N199 and D213. Residues N264 and 321-323 (GIV) each bind substrate.

This sequence belongs to the succinate/malate CoA ligase beta subunit family. As to quaternary structure, heterotetramer of two alpha and two beta subunits. The cofactor is Mg(2+).

It carries out the reaction succinate + ATP + CoA = succinyl-CoA + ADP + phosphate. The enzyme catalyses GTP + succinate + CoA = succinyl-CoA + GDP + phosphate. The protein operates within carbohydrate metabolism; tricarboxylic acid cycle; succinate from succinyl-CoA (ligase route): step 1/1. Functionally, succinyl-CoA synthetase functions in the citric acid cycle (TCA), coupling the hydrolysis of succinyl-CoA to the synthesis of either ATP or GTP and thus represents the only step of substrate-level phosphorylation in the TCA. The beta subunit provides nucleotide specificity of the enzyme and binds the substrate succinate, while the binding sites for coenzyme A and phosphate are found in the alpha subunit. The protein is Succinate--CoA ligase [ADP-forming] subunit beta of Campylobacter curvus (strain 525.92).